The primary structure comprises 215 residues: Large ribosomal subunit protein uL4 (215 aa).

The segment at 46–72 is disordered; the sequence is TAKSKNRAEVSGGGRKPWAQKGGGRAR. Gly residues predominate over residues 56-71; the sequence is SGGGRKPWAQKGGGRA.

It belongs to the universal ribosomal protein uL4 family. As to quaternary structure, part of the 50S ribosomal subunit.

One of the primary rRNA binding proteins, this protein initially binds near the 5'-end of the 23S rRNA. It is important during the early stages of 50S assembly. It makes multiple contacts with different domains of the 23S rRNA in the assembled 50S subunit and ribosome. In terms of biological role, forms part of the polypeptide exit tunnel. This Helicobacter pylori (strain J99 / ATCC 700824) (Campylobacter pylori J99) protein is Large ribosomal subunit protein uL4.